The primary structure comprises 1016 residues: Rho family-interacting cell polarization regulator 2 (1016 aa).

Ser21 and Ser37 each carry phosphoserine. The tract at residues 44 to 73 (AVKKPQAKLKKMHNLGHKNSSPPKEPQPKR) is disordered. Over residues 48–59 (PQAKLKKMHNLG) the composition is skewed to basic residues. The involved in cell filopodia formation stretch occupies residues 55-113 (MHNLGHKNSSPPKEPQPKRVEEVYRALKNGLDEYLEVHQTELDKLTTQLKDMRRNSRLG). A coiled-coil region spans residues 85–112 (LDEYLEVHQTELDKLTTQLKDMRRNSRL). At Ser341 the chain carries Phosphoserine. Residues 414-428 (TSTELPPGSQSSQNE) are compositionally biased toward polar residues. Residues 414-469 (TSTELPPGSQSSQNEGLKDSSSASCSSSSREGSEPRPHPEGETQGLGKPEGCPVAT) are disordered. The segment covering 433 to 442 (SSSASCSSSS) has biased composition (low complexity). Residues 444 to 454 (EGSEPRPHPEG) are compositionally biased toward basic and acidic residues. A phosphoserine mark is found at Ser520 and Ser532. Residues 636 to 656 (DSVFSDTETEKNSYRSVHPEA) form a disordered region. Over residues 643–656 (ETEKNSYRSVHPEA) the composition is skewed to basic and acidic residues.

Belongs to the RIPOR family. In terms of assembly, homooligomer; homooligomerization is regulated by RHOC and leads to the formation of concatemers through the association of N- and C-termini. Interacts (phosphorylated form) with 14-3-3 proteins; these interactions occur during myogenic cell differentiation and also induces T cell proliferation arrest. Interacts (phosphorylated form) with HDAC6; this interaction occurs during early myogenic differentiation, prevents HDAC6 to deacetylate tubulin and also induces T cell proliferation arrest. Interacts with DYSF; this interaction occurs during early myogenic differentiation. Interacts with MYOF. Interacts (via active GTP- or inactive GDP-bound forms) with RHOA; this interaction is direct, blocks the loading of GTP to RHOA and decreases upon chemokine CCL19 stimulation in primary T lymphocytes. Interacts with RHOC. Interacts (via phosphorylated form) with YWHAB; this interaction occurs in a chemokine-dependent manner and does not compete for binding of RIPOR2 with RHOA nor blocks inhibition of RIPOR2-mediated RHOA activity. Interacts with YWHAE. Interacts with YWHAQ. In terms of processing, phosphorylated. Chemokine-induced phosphorylation in neutrophils occurs in a PKC- and AKT-dependent manner, resulting in RIPOR2 interaction with YWHAB and stabilization. Phosphorylated by PKCA, AKT1 and MAPKAPK1A; in vitro.

It localises to the cytoplasm. The protein resides in the cytoskeleton. The protein localises to the cell projection. It is found in the filopodium. Its subcellular location is the apical cell membrane. It localises to the stereocilium. The protein resides in the stereocilium membrane. Its function is as follows. Acts as an inhibitor of the small GTPase RHOA and plays several roles in the regulation of myoblast and hair cell differentiation, lymphocyte T proliferation and neutrophil polarization. Plays a role in fetal mononuclear myoblast differentiation by promoting filopodia and myotube formation. Maintains naive T lymphocytes in a quiescent state and prevents chemokine-induced T lymphocyte responses, such as cell adhesion, polarization and migration. Involved also in the regulation of neutrophil polarization, chemotaxis and adhesion. Required for normal development of inner and outer hair cell stereocilia within the cochlea of the inner ear. Plays a role for maintaining the structural organization of the basal domain of stereocilia. Involved in mechanosensory hair cell function. Required for normal hearing. The chain is Rho family-interacting cell polarization regulator 2 from Bos taurus (Bovine).